The following is a 136-amino-acid chain: Ubiquinol-cytochrome c reductase complex assembly factor 2 (136 aa).

A mitochondrion-targeting transit peptide spans 1–13; it reads MAALRYRRFLKLC.

Interacts with UQCC1. Forms a complex, named COMB/coordinator of mitochondrial CYTB biogenesis, composed of UQCC1, UQCC2, UQCC4, UQCC5 and UQCC6; stabilizes nascent cytochrome b/MT-CYB and promotes its membrane insertion. Forms a complex, named COMA, composed of UQCC1, UQCC2 and UQCC4; activates MT-CYB translation. Forms a complex, named COMC, composed of UQCC1, UQCC2; UQCC3 and UQCC4; mediates MT-CYB hemylation and association with the first nuclear-encoded CIII subunit UQCRQ. In terms of tissue distribution, widely expressed with highest levels in brain, liver, kidney, heart, skeletal muscle, thymus, testis and pancreas (at protein level).

The protein localises to the mitochondrion matrix. It is found in the mitochondrion nucleoid. It localises to the mitochondrion. The protein resides in the mitochondrion intermembrane space. Its subcellular location is the mitochondrion inner membrane. Functionally, required for the assembly of the ubiquinol-cytochrome c reductase complex (mitochondrial respiratory chain complex III or cytochrome b-c1 complex). Plays a role in the modulation of respiratory chain activities such as oxygen consumption and ATP production and via its modulation of the respiratory chain activity can regulate skeletal muscle differentiation and insulin secretion by pancreatic beta-cells. Involved in cytochrome b translation and/or stability. The chain is Ubiquinol-cytochrome c reductase complex assembly factor 2 (Uqcc2) from Mus musculus (Mouse).